A 430-amino-acid chain; its full sequence is Stress protein DDR48 (430 aa).

The segment at 1-430 (MGLFDKVKQF…RNQYGGDDDY (430 aa)) is disordered. Residues 12-27 (NSNNNNNDSGNNNQGD) show a composition bias toward low complexity. A compositionally biased stretch (basic and acidic residues) spans 37–60 (GEDRVNQFKSKIGEDRFDKMESKV). Low complexity predominate over residues 70-421 (NDNDSNNNDS…SYGSSNRGGR (352 aa)). 6 tandem repeats follow at residues 74–81 (SNNNDSYG), 82–89 (SNNNDSYG), 90–97 (SNNNDSYG), 98–105 (SNNNDSYG), 106–113 (SNNNDSYG), and 114–121 (SNNDDSYG). The interval 74 to 414 (SNNNDSYGSN…GSSNNDDSYG (341 aa)) is 38 X 8 AA approximate tandem repeats of S-[NS]-N-[ND]-D-S-Y-G. The stretch at 124-131 (NKKKSSYG) is one 7; approximate repeat. 5 tandem repeats follow at residues 132–139 (SNNDDSYG), 141–148 (SNNNDSYG), 149–156 (SNNNDSYG), 157–164 (SNNNDSYG), and 165–172 (SNNDDSYG). Residues 175-182 (NKNKSSYG) form a 13; approximate repeat. Residues Ser-183 and Ser-191 each carry the phosphoserine modification. Tandem repeats lie at residues 183 to 190 (SNNDDSYG) and 191 to 198 (SNNDDSYG). The stretch at 201–208 (NKKKSSYG) is one 16; approximate repeat. 4 repeat units span residues 209–216 (SSNNDSYG), 217–224 (SNNDDSYG), 225–232 (SNNNDSYG), and 233–240 (SNNDDSYG). The stretch at 243-250 (NKKKSSYG) is one 21; approximate repeat. Tandem repeats lie at residues 251–258 (SNNDDSYG), 260–267 (SNNNDSYG), and 268–275 (SNNDDSYG). Residues 278 to 285 (NKNKSSYG) form a 25; approximate repeat. Tandem repeats lie at residues 287-294 (SSNDDSYG) and 296-303 (SNNDDSYG). Residues 306–313 (NKKKSSYG) form a 28; approximate repeat. Ser-314 and Ser-322 each carry phosphoserine. 2 tandem repeats follow at residues 314-321 (SNNDDSYG) and 322-329 (SNNDDSYG). The 31; approximate repeat unit spans residues 332–339 (NKKKSSYG). 2 tandem repeats follow at residues 340-347 (SSNNDSYG) and 348-355 (SNNDDSYG). Residues 358 to 365 (NKKKSSYG) form a 34; approximate repeat. 2 consecutive repeat copies span residues 366–373 (SNNDDSYG) and 375–382 (SNNNDSYG). The stretch at 393-400 (NRNKNSYG) is one 37; approximate repeat. Repeat 38 spans residues 407 to 414 (SNNDDSYG).

Belongs to the DDR48 family. In terms of processing, probably highly glycosylated.

DNA damage-responsive protein that may be required for maintaining the rate of spontaneous mutagenesis. Shows low ATP and GTP hydrolysis activity. Dispensable for acquisition of thermotolerance and does not play a significant role in recovery or protection of cells from acute heat shock. This is Stress protein DDR48 (DDR48) from Saccharomyces cerevisiae (strain ATCC 204508 / S288c) (Baker's yeast).